The sequence spans 390 residues: Homoserine O-succinyltransferase (390 aa).

One can recognise an AB hydrolase-1 domain in the interval 59 to 369 (NAVLVCHALN…PHGHDAFLLD (311 aa)). Residue Ser-165 is the Nucleophile of the active site. Position 235 (Arg-235) interacts with substrate. Residues Asp-330 and His-363 contribute to the active site. Position 364 (Asp-364) interacts with substrate.

The protein belongs to the AB hydrolase superfamily. MetX family. In terms of assembly, homodimer.

The protein localises to the cytoplasm. It carries out the reaction L-homoserine + succinyl-CoA = O-succinyl-L-homoserine + CoA. The protein operates within amino-acid biosynthesis; L-methionine biosynthesis via de novo pathway; O-succinyl-L-homoserine from L-homoserine: step 1/1. Functionally, transfers a succinyl group from succinyl-CoA to L-homoserine, forming succinyl-L-homoserine. This chain is Homoserine O-succinyltransferase, found in Cupriavidus pinatubonensis (strain JMP 134 / LMG 1197) (Cupriavidus necator (strain JMP 134)).